The following is a 461-amino-acid chain: Elongation factor 1-alpha (461 aa).

The tr-type G domain maps to 5–242 (KIHINIVVIG…DAILPPSRPT (238 aa)). Positions 14–21 (GHVDSGKS) are G1. 14 to 21 (GHVDSGKS) contacts GTP. A G2 region spans residues 70–74 (GITID). Residues 91-94 (DAPG) are G3. GTP-binding positions include 91 to 95 (DAPGH) and 153 to 156 (NKMD). The tract at residues 153 to 156 (NKMD) is G4. The segment at 194–196 (SGW) is G5. Residues Glu301 and Glu374 each carry the 5-glutamyl glycerylphosphorylethanolamine modification.

Belongs to the TRAFAC class translation factor GTPase superfamily. Classic translation factor GTPase family. EF-Tu/EF-1A subfamily.

The protein resides in the cytoplasm. Its function is as follows. This protein promotes the GTP-dependent binding of aminoacyl-tRNA to the A-site of ribosomes during protein biosynthesis. This chain is Elongation factor 1-alpha, found in Apis mellifera (Honeybee).